A 142-amino-acid chain; its full sequence is Hemoglobin subunit alpha (142 aa).

Position 1 is an N-acetylserine (Ser1). Positions 1–142 (SLTAKSKSIV…VASALSEKYR (142 aa)) constitute a Globin domain. His59 lines the O2 pocket. His88 is a heme b binding site.

It belongs to the globin family. In terms of assembly, heterotetramer of two alpha chains and two beta chains. As to expression, red blood cells.

In terms of biological role, involved in oxygen transport from gills to the various peripheral tissues. The sequence is that of Hemoglobin subunit alpha (hba) from Electrophorus electricus (Electric eel).